The following is a 423-amino-acid chain: Lipoamide acyltransferase component of branched-chain alpha-keto acid dehydrogenase complex (423 aa).

One can recognise a Lipoyl-binding domain in the interval 3-78 (THVIKMPDIG…AVGSELIRIE (76 aa)). Lysine 44 is modified (N6-lipoyllysine). In terms of domain architecture, Peripheral subunit-binding (PSBD) spans 137-174 (LASPAVRKRALDAGIELRYVHGSGPAGRILHEDLDAFM). Active-site residues include histidine 395 and aspartate 399.

It belongs to the 2-oxoacid dehydrogenase family. Forms a 24-polypeptide structural core with octahedral symmetry. The cofactor is (R)-lipoate.

It carries out the reaction N(6)-[(R)-dihydrolipoyl]-L-lysyl-[protein] + 2-methylpropanoyl-CoA = N(6)-[(R)-S(8)-2-methylpropanoyldihydrolipoyl]-L-lysyl-[protein] + CoA. In terms of biological role, the branched-chain alpha-keto dehydrogenase complex catalyzes the overall conversion of alpha-keto acids to acyl-CoA and CO(2). It contains multiple copies of three enzymatic components: branched-chain alpha-keto acid decarboxylase (E1), lipoamide acyltransferase (E2) and lipoamide dehydrogenase (E3). This is Lipoamide acyltransferase component of branched-chain alpha-keto acid dehydrogenase complex (bkdB) from Pseudomonas putida (Arthrobacter siderocapsulatus).